Reading from the N-terminus, the 324-residue chain is Fructose-1,6-bisphosphatase class 1 (324 aa).

Mg(2+) contacts are provided by Glu-88, Asp-107, Leu-109, and Asp-110. Substrate is bound by residues 110 to 113 (DGSS), Asn-199, and Lys-265. Glu-271 provides a ligand contact to Mg(2+).

It belongs to the FBPase class 1 family. Homotetramer. Mg(2+) serves as cofactor.

It is found in the cytoplasm. The catalysed reaction is beta-D-fructose 1,6-bisphosphate + H2O = beta-D-fructose 6-phosphate + phosphate. The protein operates within carbohydrate biosynthesis; gluconeogenesis. The polypeptide is Fructose-1,6-bisphosphatase class 1 (Neisseria gonorrhoeae (strain ATCC 700825 / FA 1090)).